A 315-amino-acid polypeptide reads, in one-letter code: uncharacterized protein (315 aa).

Helical transmembrane passes span 18-38 (IWFI…IISG), 202-222 (ILAI…LAGI), and 244-264 (LIYA…VIVL). The segment at 288 to 315 (VCSTGNRSSGSTDQDISTTKQQSQEAVA) is disordered.

The protein localises to the membrane. This is an uncharacterized protein from Saccharomyces cerevisiae (strain ATCC 204508 / S288c) (Baker's yeast).